We begin with the raw amino-acid sequence, 88 residues long: Small ribosomal subunit protein bS20 (88 aa).

The segment at 1–25 (MANSPQAKKRARQNERRAEVNKARR) is disordered. The span at 12–22 (RQNERRAEVNK) shows a compositional bias: basic and acidic residues.

The protein belongs to the bacterial ribosomal protein bS20 family.

In terms of biological role, binds directly to 16S ribosomal RNA. This Dinoroseobacter shibae (strain DSM 16493 / NCIMB 14021 / DFL 12) protein is Small ribosomal subunit protein bS20.